We begin with the raw amino-acid sequence, 204 residues long: Holliday junction branch migration complex subunit RuvA (204 aa).

Residues 1 to 64 (MIGKLKGTLE…EEAIRLFGFA (64 aa)) form a domain I region. The tract at residues 65 to 143 (TRAEQEWFCM…PFEQAVKTVS (79 aa)) is domain II. The flexible linker stretch occupies residues 144-154 (VPQREITHQPA). The interval 154 to 204 (AHDALSALMKLGFEREQAARALALAMNALEGEAVSSALLIRHSLKLLSSPT) is domain III.

This sequence belongs to the RuvA family. In terms of assembly, homotetramer. Forms an RuvA(8)-RuvB(12)-Holliday junction (HJ) complex. HJ DNA is sandwiched between 2 RuvA tetramers; dsDNA enters through RuvA and exits via RuvB. An RuvB hexamer assembles on each DNA strand where it exits the tetramer. Each RuvB hexamer is contacted by two RuvA subunits (via domain III) on 2 adjacent RuvB subunits; this complex drives branch migration. In the full resolvosome a probable DNA-RuvA(4)-RuvB(12)-RuvC(2) complex forms which resolves the HJ.

The protein resides in the cytoplasm. The RuvA-RuvB-RuvC complex processes Holliday junction (HJ) DNA during genetic recombination and DNA repair, while the RuvA-RuvB complex plays an important role in the rescue of blocked DNA replication forks via replication fork reversal (RFR). RuvA specifically binds to HJ cruciform DNA, conferring on it an open structure. The RuvB hexamer acts as an ATP-dependent pump, pulling dsDNA into and through the RuvAB complex. HJ branch migration allows RuvC to scan DNA until it finds its consensus sequence, where it cleaves and resolves the cruciform DNA. This is Holliday junction branch migration complex subunit RuvA from Bartonella tribocorum (strain CIP 105476 / IBS 506).